Reading from the N-terminus, the 510-residue chain is NAD(P)H-quinone oxidoreductase subunit 2, chloroplastic (510 aa).

A run of 12 helical transmembrane segments spans residues 24–44 (LLLF…GLIL), 59–79 (WFYF…LFRW), 99–119 (IFQF…VEYI), 124–144 (MAIT…MFLC), 149–169 (LITI…LSGY), 184–204 (LLMG…LYGL), 229–249 (ISIA…PAPF), 295–315 (WHLL…LIAI), 323–343 (MLAY…IVGD), 347–367 (GYAS…GTFA), 395–415 (ALSL…AGFF), and 418–438 (LHLF…IGLL).

This sequence belongs to the complex I subunit 2 family. In terms of assembly, NDH is composed of at least 16 different subunits, 5 of which are encoded in the nucleus.

It localises to the plastid. Its subcellular location is the chloroplast thylakoid membrane. The catalysed reaction is a plastoquinone + NADH + (n+1) H(+)(in) = a plastoquinol + NAD(+) + n H(+)(out). It catalyses the reaction a plastoquinone + NADPH + (n+1) H(+)(in) = a plastoquinol + NADP(+) + n H(+)(out). Functionally, NDH shuttles electrons from NAD(P)H:plastoquinone, via FMN and iron-sulfur (Fe-S) centers, to quinones in the photosynthetic chain and possibly in a chloroplast respiratory chain. The immediate electron acceptor for the enzyme in this species is believed to be plastoquinone. Couples the redox reaction to proton translocation, and thus conserves the redox energy in a proton gradient. The protein is NAD(P)H-quinone oxidoreductase subunit 2, chloroplastic of Muilla maritima (Sea muilla).